Reading from the N-terminus, the 90-residue chain is UPF0237 protein MMP0657 (90 aa).

The ACT domain occupies 5 to 79; it reads VITVVGVDKP…SEIGVKINVQ (75 aa).

The protein belongs to the UPF0237 family.

This chain is UPF0237 protein MMP0657, found in Methanococcus maripaludis (strain DSM 14266 / JCM 13030 / NBRC 101832 / S2 / LL).